Reading from the N-terminus, the 306-residue chain is MPNPLYRQHIISISDLSREQLECLLQTALKLKAHPRGDLLEGKLIGSCFFEPSTRTRLSFETAVQRLGGKVIGFSDGANTSAKKGETLADTARIISGYTDAIVQRHPKDGAARVAAEFSRVPVINAGDGTNQHPSQTLLDLVTIYETQGRLDKLKIAMAGDLKYGRTVHSLCQALKRWGCEFAFVSPPSLAMPDYITEELEEADCRYRALGSLEEAAEWADILYMTRVQRERFDEQEFAKIQGKFNLEASMLARAKPNLRVLHPLPRTDEIHPDVDAAPHAYYFEQATNGVYARMAILSLVLNEEV.

Carbamoyl phosphate is bound by residues Arg55 and Thr56. Lys84 lines the L-aspartate pocket. Carbamoyl phosphate contacts are provided by Arg105, His133, and Gln136. Arg166 and Arg227 together coordinate L-aspartate. 2 residues coordinate carbamoyl phosphate: Leu265 and Pro266.

Belongs to the aspartate/ornithine carbamoyltransferase superfamily. ATCase family. Heterododecamer (2C3:3R2) of six catalytic PyrB chains organized as two trimers (C3), and six regulatory PyrI chains organized as three dimers (R2).

The enzyme catalyses carbamoyl phosphate + L-aspartate = N-carbamoyl-L-aspartate + phosphate + H(+). It participates in pyrimidine metabolism; UMP biosynthesis via de novo pathway; (S)-dihydroorotate from bicarbonate: step 2/3. Its function is as follows. Catalyzes the condensation of carbamoyl phosphate and aspartate to form carbamoyl aspartate and inorganic phosphate, the committed step in the de novo pyrimidine nucleotide biosynthesis pathway. The sequence is that of Aspartate carbamoyltransferase catalytic subunit from Neisseria gonorrhoeae (strain NCCP11945).